A 399-amino-acid polypeptide reads, in one-letter code: Elongation factor Tu (399 aa).

One can recognise a tr-type G domain in the interval 10-204 (KPHVNIGTIG…AVDASIPEPE (195 aa)). Positions 19–26 (GHVDHGKT) are G1. 19–26 (GHVDHGKT) provides a ligand contact to GTP. Threonine 26 provides a ligand contact to Mg(2+). The G2 stretch occupies residues 60 to 64 (GITIN). The G3 stretch occupies residues 81–84 (DCPG). Residues 81-85 (DCPGH) and 136-139 (NKCD) each bind GTP. The segment at 136–139 (NKCD) is G4. The interval 174–176 (SGL) is G5.

This sequence belongs to the TRAFAC class translation factor GTPase superfamily. Classic translation factor GTPase family. EF-Tu/EF-1A subfamily. As to quaternary structure, monomer.

The protein resides in the cytoplasm. The catalysed reaction is GTP + H2O = GDP + phosphate + H(+). Functionally, GTP hydrolase that promotes the GTP-dependent binding of aminoacyl-tRNA to the A-site of ribosomes during protein biosynthesis. The protein is Elongation factor Tu of Synechococcus sp. (strain CC9902).